A 440-amino-acid polypeptide reads, in one-letter code: General transcription factor IIE subunit 1 (440 aa).

Residue A2 is modified to N-acetylalanine. In terms of domain architecture, HTH TFE/IIEalpha-type spans 14-104; sequence LKRLAKYVIR…NYRTLVNVVK (91 aa). The residue at position 67 (K67) is an N6-acetyllysine. C129, C132, C154, and C157 together coordinate Zn(2+). Residues 129–157 form a C4-type zinc finger; the sequence is CPVCCSTFTDLEANQLFDPMTGTFRCTFC. At S268 the chain carries Phosphoserine. The segment covering 333-353 has biased composition (low complexity); that stretch reads SSVTAGSVGAAAPVTAANGSD. Residues 333 to 395 form a disordered region; it reads SSVTAGSVGA…EEFEEVADDP (63 aa). Composition is skewed to acidic residues over residues 354–364 and 381–393; these read SESETSESDDD and EDEE…EVAD.

This sequence belongs to the TFIIE alpha subunit family. As to quaternary structure, tetramer of two alpha and two beta chains. Interacts with TAF6/TAFII80. Interacts with ATF7IP. Interacts with SND1. Part of TBP-based Pol II pre-initiation complex (PIC), in which Pol II core assembles with general transcription factors and other specific initiation factors including GTF2E1, GTF2E2, GTF2F1, GTF2F2, TCEA1, ERCC2, ERCC3, GTF2H2, GTF2H3, GTF2H4, GTF2H5, GTF2A1, GTF2A2, GTF2B and TBP; this large multi-subunit PIC complex mediates DNA unwinding and targets Pol II core to the transcription start site where the first phosphodiester bond forms.

Its subcellular location is the nucleus. Its function is as follows. Recruits TFIIH to the initiation complex and stimulates the RNA polymerase II C-terminal domain kinase and DNA-dependent ATPase activities of TFIIH. Both TFIIH and TFIIE are required for promoter clearance by RNA polymerase. The protein is General transcription factor IIE subunit 1 (Gtf2e1) of Mus musculus (Mouse).